We begin with the raw amino-acid sequence, 210 residues long: Small ribosomal subunit protein uS3 (210 aa).

Residues 17 to 86 form the KH type-2 domain; that stretch reads IDEFLEKELR…NPQIEVEEIK (70 aa).

The protein belongs to the universal ribosomal protein uS3 family. Part of the 30S ribosomal subunit.

Binds the lower part of the 30S subunit head. This is Small ribosomal subunit protein uS3 from Pyrococcus furiosus (strain ATCC 43587 / DSM 3638 / JCM 8422 / Vc1).